The following is a 464-amino-acid chain: Asparagine--tRNA ligase (464 aa).

The protein belongs to the class-II aminoacyl-tRNA synthetase family. Homodimer.

The protein localises to the cytoplasm. It catalyses the reaction tRNA(Asn) + L-asparagine + ATP = L-asparaginyl-tRNA(Asn) + AMP + diphosphate + H(+). This is Asparagine--tRNA ligase from Clostridium beijerinckii (strain ATCC 51743 / NCIMB 8052) (Clostridium acetobutylicum).